Here is a 131-residue protein sequence, read N- to C-terminus: Insertion element IS1 protein InsB (131 aa).

Belongs to the transposase 27 family.

Absolutely required for transposition of IS1. The polypeptide is Insertion element IS1 protein InsB (insB1) (Shigella flexneri).